The chain runs to 680 residues: DNA-directed RNA polymerase subunit beta' (680 aa).

4 residues coordinate Zn(2+): C69, C71, C87, and C90. Mg(2+)-binding residues include D489, D491, and D493.

This sequence belongs to the RNA polymerase beta' chain family. RpoC1 subfamily. In plastids the minimal PEP RNA polymerase catalytic core is composed of four subunits: alpha, beta, beta', and beta''. When a (nuclear-encoded) sigma factor is associated with the core the holoenzyme is formed, which can initiate transcription. The cofactor is Mg(2+). Zn(2+) serves as cofactor.

It localises to the plastid. It is found in the chloroplast. It catalyses the reaction RNA(n) + a ribonucleoside 5'-triphosphate = RNA(n+1) + diphosphate. Its function is as follows. DNA-dependent RNA polymerase catalyzes the transcription of DNA into RNA using the four ribonucleoside triphosphates as substrates. The chain is DNA-directed RNA polymerase subunit beta' from Ceratophyllum demersum (Rigid hornwort).